A 437-amino-acid polypeptide reads, in one-letter code: 5-hydroxytryptamine receptor 3B (437 aa).

Residues M1–P21 form the signal peptide. The Extracellular portion of the chain corresponds to Q22–P235. Residues N25, N92, and N134 are each glycosylated (N-linked (GlcNAc...) asparagine). A disulfide bridge connects residues C151 and C165. A helical membrane pass occupies residues L236–G255. The Cytoplasmic portion of the chain corresponds to S256 to R266. Residues I267–M284 traverse the membrane as a helical segment. Over S285–T295 the chain is Extracellular. The chain crosses the membrane as a helical span at residues S296 to Y324. At E325 to Q410 the chain is on the cytoplasmic side. The interval F377–D409 is HA-stretch; determines single-channel conductance in 5-HT3 receptors. Residues L411–W434 form a helical membrane-spanning segment. Topologically, residues S435–M437 are extracellular.

It belongs to the ligand-gated ion channel (TC 1.A.9) family. 5-hydroxytryptamine receptor (TC 1.A.9.2) subfamily. HTR3B sub-subfamily. In terms of assembly, forms homopentameric as well as heteropentameric serotonin-activated cation-selective channel complexes with HTR3A. The homomeric complex is not functional. Heteropentameric complexes display properties which resemble that of neuronal serotonin-activated channels in vivo. Post-translationally, N-glycosylation is required for membrane localization. In terms of tissue distribution, expressed in peripheral neurons, but not in neurons of the central nervous system.

It is found in the postsynaptic cell membrane. The protein localises to the cell membrane. The enzyme catalyses Na(+)(in) = Na(+)(out). It carries out the reaction K(+)(in) = K(+)(out). It catalyses the reaction Ca(2+)(in) = Ca(2+)(out). In terms of biological role, forms serotonin (5-hydroxytryptamine/5-HT3)-activated cation-selective channel complexes, which when activated cause fast, depolarizing responses in neurons. This chain is 5-hydroxytryptamine receptor 3B, found in Rattus norvegicus (Rat).